Here is an 879-residue protein sequence, read N- to C-terminus: Pyruvate dehydrogenase phosphatase regulatory subunit, mitochondrial (879 aa).

The N-terminal 27 residues, 1–27, are a transit peptide targeting the mitochondrion; it reads MMFYRLLSIVGRQRASPGWQNWSSARN.

It belongs to the GcvT family. Heterodimer of a catalytic (PDP1) and a regulatory (PDPR) subunit.

It is found in the mitochondrion matrix. Its function is as follows. Decreases the sensitivity of PDP1 to magnesium ions, and this inhibition is reversed by the polyamine spermine. The sequence is that of Pyruvate dehydrogenase phosphatase regulatory subunit, mitochondrial (PDPR) from Homo sapiens (Human).